A 279-amino-acid chain; its full sequence is Urease accessory protein UreD (279 aa).

This sequence belongs to the UreD family. UreD, UreF and UreG form a complex that acts as a GTP-hydrolysis-dependent molecular chaperone, activating the urease apoprotein by helping to assemble the nickel containing metallocenter of UreC. The UreE protein probably delivers the nickel.

The protein localises to the cytoplasm. In terms of biological role, required for maturation of urease via the functional incorporation of the urease nickel metallocenter. This Streptococcus thermophilus (strain ATCC BAA-250 / LMG 18311) protein is Urease accessory protein UreD.